A 192-amino-acid polypeptide reads, in one-letter code: Thymidine kinase (192 aa).

Residues 9-16 (SAMNAGKS) and 87-90 (DECQ) contribute to the ATP site. Glu88 acts as the Proton acceptor in catalysis. Residues Cys145, Cys147, Cys182, and His185 each coordinate Zn(2+).

It belongs to the thymidine kinase family. As to quaternary structure, homotetramer.

It localises to the cytoplasm. The catalysed reaction is thymidine + ATP = dTMP + ADP + H(+). The protein is Thymidine kinase of Vibrio vulnificus (strain CMCP6).